A 471-amino-acid polypeptide reads, in one-letter code: Glutamate--tRNA ligase 1 (471 aa).

The 'HIGH' region motif lies at 15–25 (PSPTGYLHIGG). The 'KMSKS' region motif lies at 243 to 247 (KLSKR). K246 is an ATP binding site.

It belongs to the class-I aminoacyl-tRNA synthetase family. Glutamate--tRNA ligase type 1 subfamily. As to quaternary structure, monomer.

The protein resides in the cytoplasm. It catalyses the reaction tRNA(Glu) + L-glutamate + ATP = L-glutamyl-tRNA(Glu) + AMP + diphosphate. In terms of biological role, catalyzes the attachment of glutamate to tRNA(Glu) in a two-step reaction: glutamate is first activated by ATP to form Glu-AMP and then transferred to the acceptor end of tRNA(Glu). The protein is Glutamate--tRNA ligase 1 of Cereibacter sphaeroides (strain ATCC 17023 / DSM 158 / JCM 6121 / CCUG 31486 / LMG 2827 / NBRC 12203 / NCIMB 8253 / ATH 2.4.1.) (Rhodobacter sphaeroides).